A 488-amino-acid polypeptide reads, in one-letter code: Ribulose bisphosphate carboxylase large chain (488 aa).

2 residues coordinate substrate: asparagine 127 and threonine 177. Catalysis depends on lysine 179, which acts as the Proton acceptor. Lysine 181 contributes to the substrate binding site. Positions 205, 207, and 208 each coordinate Mg(2+). At lysine 205 the chain carries N6-carboxylysine. Residue histidine 297 is the Proton acceptor of the active site. The substrate site is built by arginine 298, histidine 330, and serine 382.

The protein belongs to the RuBisCO large chain family. Type I subfamily. In terms of assembly, heterohexadecamer of 8 large chains and 8 small chains. Mg(2+) is required as a cofactor.

Its subcellular location is the plastid. The protein resides in the chloroplast. It catalyses the reaction 2 (2R)-3-phosphoglycerate + 2 H(+) = D-ribulose 1,5-bisphosphate + CO2 + H2O. The enzyme catalyses D-ribulose 1,5-bisphosphate + O2 = 2-phosphoglycolate + (2R)-3-phosphoglycerate + 2 H(+). In terms of biological role, ruBisCO catalyzes two reactions: the carboxylation of D-ribulose 1,5-bisphosphate, the primary event in carbon dioxide fixation, as well as the oxidative fragmentation of the pentose substrate in the photorespiration process. Both reactions occur simultaneously and in competition at the same active site. The protein is Ribulose bisphosphate carboxylase large chain of Pylaiella littoralis (Seaweed).